A 374-amino-acid polypeptide reads, in one-letter code: Probable tRNA pseudouridine synthase D (374 aa).

The Nucleophile role is filled by D81. The TRUD domain occupies 141 to 340 (VFPNYFDVQR…RKGFQKMYDL (200 aa)).

Belongs to the pseudouridine synthase TruD family.

It carries out the reaction uridine(13) in tRNA = pseudouridine(13) in tRNA. Could be responsible for synthesis of pseudouridine from uracil-13 in transfer RNAs. In Nanoarchaeum equitans (strain Kin4-M), this protein is Probable tRNA pseudouridine synthase D.